A 302-amino-acid chain; its full sequence is tRNA dimethylallyltransferase (302 aa).

8 to 15 is an ATP binding site; that stretch reads GSSGSGKS. 10–15 provides a ligand contact to substrate; that stretch reads SGSGKS. The interaction with substrate tRNA stretch occupies residues 33–36; that stretch reads DSLS.

The protein belongs to the IPP transferase family. Monomer. The cofactor is Mg(2+).

It carries out the reaction adenosine(37) in tRNA + dimethylallyl diphosphate = N(6)-dimethylallyladenosine(37) in tRNA + diphosphate. Functionally, catalyzes the transfer of a dimethylallyl group onto the adenine at position 37 in tRNAs that read codons beginning with uridine, leading to the formation of N6-(dimethylallyl)adenosine (i(6)A). This is tRNA dimethylallyltransferase from Helicobacter hepaticus (strain ATCC 51449 / 3B1).